Here is a 590-residue protein sequence, read N- to C-terminus: MHLARLVGSCSLLLLLGALSGWAASDDPIEKVIEGINRGLSNAEREVGKALDGINSGITHAGREVEKVFNGLSNMGSHTGKELDKGVQGLNHGMDKVAHEINHGIGQAGKEAEKLGHGVNNAAGQVGKEADKLIHHGVHHGANQAGSEAGKFGQGVDNAAGQAGNEAGRFGQGVHHAAGQAGNEAGRFGQGVHHAAGQAGNEAGRFGQGAHHGLSEGWKETEKFGQGIHHAAGQVGKEAEKFGQGAHHAAGQAGNEAGRFGQGVHHGLSEGWKETEKFGQGVHHTAGQVGKEAEKFGQGAHHAAGQAGNEAGRFGQGAHHAAGQAGNEAGRFGQGVHHGLSEGWKETEKFGQGVHHAASQFGKETEKLGHGVHHGVNEAWKEAEKFGQGVHHAASQVGKEEDRVVQGLHHGVSQAGREAGQFGHDIHHTAGQAGKEGDIAVHGVQPGVHEAGKEAGQFGQGVHHTLEQAGKEADKAVQGFHTGVHQAGKEAEKLGQGVNHAADQAGKEVEKLGQGAHHAAGQAGKELQNAHNGVNQASKEANQLLNGNHQSGSSSHQGGATTTPLASGASVNTPFINLPALWRSVANIMP.

Positions 1 to 25 (MHLARLVGSCSLLLLLGALSGWAAS) are cleaved as a signal peptide. 4 disordered regions span residues 182-213 (GNEA…AHHG), 242-266 (FGQG…GVHH), 297-338 (GQGA…GVHH), and 545-570 (LNGN…SGAS). Low complexity-rich tracts occupy residues 190–200 (QGVHHAAGQAG), 243–254 (GQGAHHAAGQAG), 297–330 (GQGA…NEAG), and 546–559 (NGNH…HQGG). Residues 560–570 (ATTTPLASGAS) are compositionally biased toward polar residues.

As to expression, detected in thymus, uterus and esophagus.

The protein localises to the secreted. The protein is Suprabasin (SBSN) of Homo sapiens (Human).